A 2341-amino-acid polypeptide reads, in one-letter code: MGSQTLQILRQGVWAALSGGWYYDPHQATFVNALHLYLWLFLLGLPFTLYMALPSTMIIVAVYCPVIAAVFIVLKMVNYRLHRALDAGEVVDRTANEFTDQRTKAEQGNCSTRRKDSNGPSDPGGGIEMSEFIREATPPVGCSSRNSYAGLDPSNQIGSGSSRLGTAATIKGDTDTAKTSDDISLSLGQSSSLCKEGSEEQDLAADRKLFRLVSNDSFISIQPSLSSCGQDLPRDFSDKVNLPSHNHHHHVDQSLSSACDTEVASLVPLHSHSYRKDHRPRGVPRTSSSAVAFPDTSLNDFPLYQQRRGLDPVSELESSKPLSGSKESLVENSGLSGEFQLAGDLKINTSQPPTKSGKSKPLKAEKSMDSLRSLSTRSSGSTESYCSGTDRDTNSTVSSYKSEQTSSTHIESILSEHEESPKAGTKSGRKKECCAGPEEKNSCASDKRTSSEKIAMEASTNSGVHEAKDPTPSDEMHNQRGLSTSASEEANKNPHANEFTSQGDRPPGNTAENKEEKSDKSAVSVDSKVRKDVGGKQKEGDVRPKSSSVIHRTASAHKSGRRRTGKKRASSFDSSRHRDYVCFRGVSGTKPHSAIFCHDEDSSDQSDLSRASSVQSAHQFSSDSSSSTTSHSCQSPEGRYSALKTKHTHKERGTDSEHTHKAHLVPEGTSKKRATRRTSSTNSAKTRARVLSLDSGTVACLNDSNRLMAPESIKPLTTSKSDLEAKEGEVLDELSLLGRASQLETVTRSRNSLPNQVAFPEGEEQDAVSGAAQASEEAVSFRRERSTFRRQAVRRRHNAGSNPTPPTLLIGSPLSLQDGQQGQQSTAQVKVQSRPPSQAAVLSASASLLVRNGSVHLEASHDNASAVGGSSLHDELGKFSSTLYETGGCDMSLVNFEPAARRASNICDTDSHVSSSTSVRFYPHDVLSLPQIRLNRLLTIDTDLLEQQDIDLSPDLAATYGPTEEAAQKVKHYYRFWILPQLWIGINFDRLTLLALFDRNREILENVLAVILAILVAFLGSILLIQGFFRDIWVFQFCLVIASCQYSLLKSVQPDSSSPRHGHNRIIAYSRPVYFCICCGLIWLLDYGSRNLTATKFKLYGITFTNPLVFISARDLVIVFTLCFPIVFFIGLLPQVNTFVMYLCEQLDIHIFGGNATTSLLAALYSFICSIVAVALLYGLCYGALKDSWDGQHIPVLFSIFCGLLVAVSYHLSRQSSDPSVLFSLVQSKIFPKTEEKNPEDPLSEVKDPLPEKLRNSVSERLQSDLVVCIVIGVLYFAIHVSTVFTVLQPALKYVLYTLVGFVGFVTHYVLPQVRKQLPWHCFSHPLLKTLEYNQYEVRNAATMMWFEKLHVWLLFVEKNIIYPLIVLNELSSSAETIASPKKLNTELGALMITVAGLKLLRSSFSSPTYQYVTVIFTVLFFKFDYEAFSETMLLDLFFMSILFNKLWELLYKLQFVYTYIAPWQITWGSAFHAFAQPFAVPHSAMLFIQAAVSAFFSTPLNPFLGSAIFITSYVRPVKFWERDYNTKRVDHSNTRLASQLDRNPGSDDNNLNSIFYEHLTRSLQHSLCGDLLLGRWGNYSTGDCFILASDYLNALVHLIEIGNGLVTFQLRGLEFRGTYCQQREVEAITEGVEEDEGFCCCEPGHIPHMLSFNAAFSQRWLAWEVIVTKYILEGYSITDNSAASMLQVFDLRKVLTTYYVKGIIYYVTTSSKLEEWLANETMQEGLRLCADRNYVDVDPTFNPNIDEDYDHRLAGISRESFCVIYLNWIEYCSSRRAKPVDVDKDSSLVTLCYGLCVLGRRALGTASHHMSSNLESFLYGLHALFKGDFRISSIRDEWIFADMELLRKVVVPGIRMSIKLHQDHFTSPDEYDDPTVLYEAIVSHEKNLVIAHEGDPAWRSAVLANSPSLLALRHVMDDGTNEYKIIMLNRRYLSFRVIKVNKECVRGLWAGQQQELVFLRNRNPERGSIQNAKQALRNMINSSCDQPIGYPIFVSPLTTSYSDSHEQLKDILGGPISLGNIRNFIVSTWHRLRKGCGAGCNSGGNIEDSDTGGGTSCTGNNATTANNPHSNVTQGSIGNPGQGSGTGLHPPVTSYPPTLGTSHSSHSVQSGLVRQSPARASVASQSSYCYSSRHSSLRMSTTGFVPCRRSSTSQISLRNLPSSIQSRLSMVNQMEPSGQSGLACVQHGLPSSSSSSQSIPACKHHTLVGFLATEGGQSSATDAQPGNTLSPANNSHSRKAEVIYRVQIVDPSQILEGINLSKRKELQWPDEGIRLKAGRNSWKDWSPQEGMEGHVIHRWVPCSRDPGTRSHIDKAVLLVQIDDKYVTVIETGVLELGAEV.

A run of 2 helical transmembrane segments spans residues 28–50 (ATFV…FTLY) and 57–74 (MIIV…FIVL). Residues 98 to 163 (FTDQRTKAEQ…SNQIGSGSSR (66 aa)) form a disordered region. Residue Asn-109 is glycosylated (N-linked (GlcNAc...) asparagine). Positions 143 to 163 (SSRNSYAGLDPSNQIGSGSSR) are enriched in polar residues. N-linked (GlcNAc...) asparagine glycosylation is present at Asn-215. Disordered regions lie at residues 270-294 (HSHS…VAFP), 311-331 (DPVS…SLVE), and 344-689 (DLKI…TRAR). The segment covering 272–282 (HSYRKDHRPRG) has biased composition (basic residues). Polar residues-rich tracts occupy residues 320-331 (KPLSGSKESLVE) and 347-356 (INTSQPPTKS). The N-linked (GlcNAc...) asparagine glycan is linked to Asn-348. Over residues 370–388 (SLRSLSTRSSGSTESYCSG) the composition is skewed to low complexity. Asn-394 carries N-linked (GlcNAc...) asparagine glycosylation. Residues 394–404 (NSTVSSYKSEQ) show a composition bias toward polar residues. 3 stretches are compositionally biased toward basic and acidic residues: residues 430–455 (KKEC…EKIA), 465–478 (HEAK…EMHN), and 527–544 (SKVR…DVRP). Residues 554 to 569 (ASAHKSGRRRTGKKRA) show a composition bias toward basic residues. Residues 605-635 (QSDLSRASSVQSAHQFSSDSSSSTTSHSCQS) show a composition bias toward low complexity. N-linked (GlcNAc...) asparagine glycosylation is present at Asn-702. The interval 756 to 834 (QVAFPEGEEQ…STAQVKVQSR (79 aa)) is disordered. Positions 814 to 832 (LSLQDGQQGQQSTAQVKVQ) are enriched in low complexity. N-linked (GlcNAc...) asparagine glycans are attached at residues Asn-852 and Asn-863. 3 helical membrane passes run 1003–1025 (ILEN…ILLI), 1032–1049 (IWVF…YSLL), and 1067–1089 (IAYS…DYGS). Asn-1091 carries an N-linked (GlcNAc...) asparagine glycan. Residues 1110–1132 (FISARDLVIVFTLCFPIVFFIGL) traverse the membrane as a helical segment. The N-linked (GlcNAc...) asparagine glycan is linked to Asn-1155. The next 4 membrane-spanning stretches (helical) occupy residues 1160–1182 (LLAA…GLCY), 1194–1213 (IPVL…YHLS), 1266–1288 (LVVC…FTVL), and 1295–1312 (VLYT…YVLP). 5 N-linked (GlcNAc...) asparagine glycosylation sites follow: Asn-1579, Asn-1720, Asn-1982, Asn-2062, and Asn-2072. Disordered stretches follow at residues 2062–2120 (NATT…SPAR) and 2217–2237 (GQSS…NNSH). 3 stretches are compositionally biased toward polar residues: residues 2069 to 2078 (PHSNVTQGSI), 2096 to 2114 (YPPT…SGLV), and 2217 to 2236 (GQSS…ANNS). Residues Asn-2234 and Asn-2260 are each glycosylated (N-linked (GlcNAc...) asparagine).

It belongs to the pecanex family.

Its subcellular location is the membrane. In Homo sapiens (Human), this protein is Pecanex-like protein 1.